A 291-amino-acid polypeptide reads, in one-letter code: Protease HtpX (291 aa).

The next 2 membrane-spanning stretches (helical) occupy residues 4-24 (IILF…ILSF) and 32-52 (ISGL…ISLL). H139 lines the Zn(2+) pocket. The active site involves E140. A Zn(2+)-binding site is contributed by H143. The next 2 membrane-spanning stretches (helical) occupy residues 158–178 (IVNT…SSIL) and 192–212 (WVYI…ASII). A Zn(2+)-binding site is contributed by E221.

It belongs to the peptidase M48B family. The cofactor is Zn(2+).

The protein localises to the cell membrane. The sequence is that of Protease HtpX from Buchnera aphidicola subsp. Baizongia pistaciae (strain Bp).